Reading from the N-terminus, the 73-residue chain is UPF0435 protein lwe1727 (73 aa).

Belongs to the UPF0435 family.

In Listeria welshimeri serovar 6b (strain ATCC 35897 / DSM 20650 / CCUG 15529 / CIP 8149 / NCTC 11857 / SLCC 5334 / V8), this protein is UPF0435 protein lwe1727.